Here is a 660-residue protein sequence, read N- to C-terminus: Bifunctional polymyxin resistance protein ArnA (660 aa).

Residues 1-304 (MKTVVFAYHD…TLGLVQGSRL (304 aa)) form a formyltransferase ArnAFT region. 86–88 (HLI) contributes to the (6R)-10-formyltetrahydrofolate binding site. Residue H104 is the Proton donor; for formyltransferase activity of the active site. (6R)-10-formyltetrahydrofolate-binding positions include R114 and 136–140 (VKRAD). The tract at residues 314-660 (RRTRVLILGV…RTVDLTDKPS (347 aa)) is dehydrogenase ArnADH. NAD(+) is bound by residues D347 and 368 to 369 (DI). UDP-alpha-D-glucuronate is bound by residues A393, Y398, and 432-433 (TS). E434 functions as the Proton acceptor; for decarboxylase activity in the catalytic mechanism. Residues R460, N492, 526 to 535 (KLIDGGKQKR), and Y613 each bind UDP-alpha-D-glucuronate. Residue R619 is the Proton donor; for decarboxylase activity of the active site.

The protein in the N-terminal section; belongs to the Fmt family. UDP-L-Ara4N formyltransferase subfamily. It in the C-terminal section; belongs to the NAD(P)-dependent epimerase/dehydratase family. UDP-glucuronic acid decarboxylase subfamily. Homohexamer, formed by a dimer of trimers.

The enzyme catalyses UDP-alpha-D-glucuronate + NAD(+) = UDP-beta-L-threo-pentopyranos-4-ulose + CO2 + NADH. The catalysed reaction is UDP-4-amino-4-deoxy-beta-L-arabinose + (6R)-10-formyltetrahydrofolate = UDP-4-deoxy-4-formamido-beta-L-arabinose + (6S)-5,6,7,8-tetrahydrofolate + H(+). It participates in nucleotide-sugar biosynthesis; UDP-4-deoxy-4-formamido-beta-L-arabinose biosynthesis; UDP-4-deoxy-4-formamido-beta-L-arabinose from UDP-alpha-D-glucuronate: step 1/3. The protein operates within nucleotide-sugar biosynthesis; UDP-4-deoxy-4-formamido-beta-L-arabinose biosynthesis; UDP-4-deoxy-4-formamido-beta-L-arabinose from UDP-alpha-D-glucuronate: step 3/3. Its pathway is bacterial outer membrane biogenesis; lipopolysaccharide biosynthesis. In terms of biological role, bifunctional enzyme that catalyzes the oxidative decarboxylation of UDP-glucuronic acid (UDP-GlcUA) to UDP-4-keto-arabinose (UDP-Ara4O) and the addition of a formyl group to UDP-4-amino-4-deoxy-L-arabinose (UDP-L-Ara4N) to form UDP-L-4-formamido-arabinose (UDP-L-Ara4FN). The modified arabinose is attached to lipid A and is required for resistance to polymyxin and cationic antimicrobial peptides. The chain is Bifunctional polymyxin resistance protein ArnA from Shigella boydii serotype 4 (strain Sb227).